We begin with the raw amino-acid sequence, 788 residues long: uncharacterized protein (788 aa).

Positions 485–693 (EMITTAWIKL…IYIVLKSYKG (209 aa)) constitute an Adrift-type SAM-dependent 2'-O-MTase domain. S-adenosyl-L-methionine contacts are provided by Gly-521 and Asp-604. Lys-645 serves as the catalytic Proton acceptor.

This is an uncharacterized protein from Acanthamoeba polyphaga (Amoeba).